We begin with the raw amino-acid sequence, 335 residues long: DNA-directed RNA polymerase subunit alpha (335 aa).

The segment at methionine 1–glutamate 233 is alpha N-terminal domain (alpha-NTD). The interval valine 247–arginine 335 is alpha C-terminal domain (alpha-CTD).

The protein belongs to the RNA polymerase alpha chain family. In terms of assembly, homodimer. The RNAP catalytic core consists of 2 alpha, 1 beta, 1 beta' and 1 omega subunit. When a sigma factor is associated with the core the holoenzyme is formed, which can initiate transcription.

It catalyses the reaction RNA(n) + a ribonucleoside 5'-triphosphate = RNA(n+1) + diphosphate. In terms of biological role, DNA-dependent RNA polymerase catalyzes the transcription of DNA into RNA using the four ribonucleoside triphosphates as substrates. The chain is DNA-directed RNA polymerase subunit alpha from Psychrobacter sp. (strain PRwf-1).